The following is a 476-amino-acid chain: Glycogen synthase (476 aa).

K15 is a binding site for ADP-alpha-D-glucose.

It belongs to the glycosyltransferase 1 family. Bacterial/plant glycogen synthase subfamily.

The enzyme catalyses [(1-&gt;4)-alpha-D-glucosyl](n) + ADP-alpha-D-glucose = [(1-&gt;4)-alpha-D-glucosyl](n+1) + ADP + H(+). It functions in the pathway glycan biosynthesis; glycogen biosynthesis. In terms of biological role, synthesizes alpha-1,4-glucan chains using ADP-glucose. The chain is Glycogen synthase from Halalkalibacterium halodurans (strain ATCC BAA-125 / DSM 18197 / FERM 7344 / JCM 9153 / C-125) (Bacillus halodurans).